A 342-amino-acid polypeptide reads, in one-letter code: MTKILGIESSCDDTAVSIITENREILSNIIISQNTEHAVFGGVVPEIAARSHLSNLDKALKSVLKESDTKLTEISAIAATSGPGLIGGVIVGSMFARSLSSALKKPFIAINHLEGHALTARLTDNIPYPYLLLLASGGHCQFVAILGLRKYKILGSTIDDAVGEAFDKVAKMLNLGFPGGSEIETRAKFGNSHKYKFPKPIINSGNCNMSFSGLKTAVRTLIMSLKEINDTVVNDIAASFQFTIGEILSSKLQDAIRAYEQMINNCDKKNIVIAGGVAANKYLQEILSSGAKTYGYQLIYPPIHLCTDNAAMIAYAGLERYNNKLFTPLNFCPKARWNLEEI.

Residues His112 and His116 each coordinate Fe cation. Residues 134–138, Asp167, Gly180, and Asn280 contribute to the substrate site; that span reads LASGG. Asp308 contributes to the Fe cation binding site.

The protein belongs to the KAE1 / TsaD family. Fe(2+) serves as cofactor.

It localises to the cytoplasm. The enzyme catalyses L-threonylcarbamoyladenylate + adenosine(37) in tRNA = N(6)-L-threonylcarbamoyladenosine(37) in tRNA + AMP + H(+). In terms of biological role, required for the formation of a threonylcarbamoyl group on adenosine at position 37 (t(6)A37) in tRNAs that read codons beginning with adenine. Is involved in the transfer of the threonylcarbamoyl moiety of threonylcarbamoyl-AMP (TC-AMP) to the N6 group of A37, together with TsaE and TsaB. TsaD likely plays a direct catalytic role in this reaction. The protein is tRNA N6-adenosine threonylcarbamoyltransferase of Rickettsia canadensis (strain McKiel).